Here is a 302-residue protein sequence, read N- to C-terminus: 4-hydroxy-tetrahydrodipicolinate synthase (302 aa).

T55 is a binding site for pyruvate. The active-site Proton donor/acceptor is the Y144. The active-site Schiff-base intermediate with substrate is the K172. V214 provides a ligand contact to pyruvate.

Belongs to the DapA family. Homotetramer; dimer of dimers.

It localises to the cytoplasm. The catalysed reaction is L-aspartate 4-semialdehyde + pyruvate = (2S,4S)-4-hydroxy-2,3,4,5-tetrahydrodipicolinate + H2O + H(+). It functions in the pathway amino-acid biosynthesis; L-lysine biosynthesis via DAP pathway; (S)-tetrahydrodipicolinate from L-aspartate: step 3/4. In terms of biological role, catalyzes the condensation of (S)-aspartate-beta-semialdehyde [(S)-ASA] and pyruvate to 4-hydroxy-tetrahydrodipicolinate (HTPA). This chain is 4-hydroxy-tetrahydrodipicolinate synthase, found in Prochlorococcus marinus (strain MIT 9313).